The primary structure comprises 184 residues: Large ribosomal subunit protein uL22 (184 aa).

Belongs to the universal ribosomal protein uL22 family. In terms of assembly, part of the 50S ribosomal subunit.

This protein binds specifically to 23S rRNA. It makes multiple contacts with different domains of the 23S rRNA in the assembled 50S subunit and ribosome. Its function is as follows. The globular domain of the protein is located near the polypeptide exit tunnel on the outside of the subunit, while an extended beta-hairpin is found that lines the wall of the exit tunnel in the center of the 70S ribosome. In Pyrobaculum calidifontis (strain DSM 21063 / JCM 11548 / VA1), this protein is Large ribosomal subunit protein uL22.